Consider the following 721-residue polypeptide: MSTILQTTDSASQVYALEITCPLGLENVLEKELHGEGLTQTRLGEAQVKLTTDLEGMYKACLWSRVATRVMLPIANFKMESADDLYDGVKAIQWSDHMNASNTIAIDCHGTNHHIRNTQFGAVRAKDAIADYFVALSGERPSVEKEQPEVRIALRIKREVVTVSIDLSGESMHRRGYRQQGGMAPLKENLAAGLLLRAGWGTDCGLTQLIDPMCGSGTFLVEAAMMSLDMAPGLRRPYWGFKGWKQHDHRMWQQLMDFAKNRKKDPATLGIRFQGTDREQKAIAAARENIKRAGLTDVIDVTMSSFQEHEFDINPDAPGLLITNPPYGERIGDEMALIALYRQLGEWVVTHVRGWQFMMLTSNDHLARQIPVRPEKSTRVINGGIECRAYQFPLLAGSIKEDVVAQSVMTPGAQMFANRLQKNAKKLKKWVEKNKIQCYRVYDADMPEYSVAIDIYGNWAHVQEYQAPKSIDPEKAKQRLFEVMSAIPTALNISESNVILKQRQRQTGKEQYEKFDQTKHEMIVEEYGCEFIVNLKDYLDTGLFLDHRPVRKLIQDKANGVRFLNLFCYTATASVHAGQGGARSSLSVDMSNTYTEWARRNIELNEFSDRYHQVERADCIEWLKQSRDKFDLIFMDPPTFSNSKKMADILDIQRDHGELVRLAMARLARGGELIFSNNYRRFVLDEALEQEYDVKNITRETLDPDFDRNDKIHQCYIIKNK.

In terms of domain architecture, THUMP spans 56–167 (GMYKACLWSR…REVVTVSIDL (112 aa)).

Belongs to the methyltransferase superfamily. RlmKL family.

It localises to the cytoplasm. It catalyses the reaction guanosine(2445) in 23S rRNA + S-adenosyl-L-methionine = N(2)-methylguanosine(2445) in 23S rRNA + S-adenosyl-L-homocysteine + H(+). The enzyme catalyses guanosine(2069) in 23S rRNA + S-adenosyl-L-methionine = N(2)-methylguanosine(2069) in 23S rRNA + S-adenosyl-L-homocysteine + H(+). Functionally, specifically methylates the guanine in position 2445 (m2G2445) and the guanine in position 2069 (m7G2069) of 23S rRNA. In Marinomonas sp. (strain MWYL1), this protein is Ribosomal RNA large subunit methyltransferase K/L.